Reading from the N-terminus, the 330-residue chain is Methionyl-tRNA formyltransferase (330 aa).

Residue 112–115 (SLLP) participates in (6S)-5,6,7,8-tetrahydrofolate binding.

Belongs to the Fmt family.

It carries out the reaction L-methionyl-tRNA(fMet) + (6R)-10-formyltetrahydrofolate = N-formyl-L-methionyl-tRNA(fMet) + (6S)-5,6,7,8-tetrahydrofolate + H(+). Attaches a formyl group to the free amino group of methionyl-tRNA(fMet). The formyl group appears to play a dual role in the initiator identity of N-formylmethionyl-tRNA by promoting its recognition by IF2 and preventing the misappropriation of this tRNA by the elongation apparatus. This Synechococcus sp. (strain RCC307) protein is Methionyl-tRNA formyltransferase.